Reading from the N-terminus, the 578-residue chain is Hemolysin 4 (578 aa).

The interval 289-322 (KDGPKASWRRRPSSASSVTMPTTPRIIGSNARPE) is disordered. The Ricin B-type lectin domain maps to 448–539 (RPVNLQLGGF…LSNLSAHQLL (92 aa)).

This sequence belongs to the HlyA hemolysin family.

Bacterial hemolysins are exotoxins that attack blood cell membranes and cause cell rupture by mechanisms not clearly defined. The polypeptide is Hemolysin 4 (ash4) (Aeromonas salmonicida).